A 551-amino-acid polypeptide reads, in one-letter code: MNLWQQNYDPAGNIWLSSLIASLPILFFFFALIKLKLKGYVAASWTVAIALAVALLFYKMPVANALASVVYGFFYGLWPIAWIIIAAVFVYKISVKTGQFDIIRSSILSITPDQRLQMLIVGFCFGAFLEGAAGFGAPVAITAALLVGLGFKPLYAAGLCLIVNTAPVAFGAMGIPILVAGQVTGIDSFEIGQMVGRQLPFMTIIVLFWIMAIMDGWRGIKETWPAVVVAGGSFAIAQYLSSNFIGPELPDIISSLVSLLCLTLFLKRWQPVRVFRFGDLGASQVDMTLAHTGYTAGQVLRAWTPFLFLTATVTLWSIPPFKALFASGGALYEWVINIPVPYLDKLVARMPPVVSEATAYAAVFKFDWFSATGTAILFAALLSIVWLKMKPSDAISTFGSTLKELALPIYSIGMVLAFAFISNYSGLSSTLALALAHTGHAFTFFSPFLGWLGVFLTGSDTSSNALFAALQATAAQQIGVSDLLLVAANTTGGVTGKMISPQSIAIACAAVGLVGKESDLFRFTVKHSLIFTCMVGVITTLQAYVLTWMIP.

12 helical membrane passes run 13-33 (NIWL…FALI), 37-57 (LKGY…ALLF), 70-90 (VYGF…AVFV), 131-151 (GAAG…GLGF), 159-179 (LCLI…PILV), 194-214 (MVGR…MAIM), 244-264 (FIGP…CLTL), 366-386 (FDWF…SIVW), 405-425 (LALP…SNYS), 438-458 (TGHA…FLTG), 494-514 (VTGK…VGLV), and 530-550 (IFTC…TWMI).

It belongs to the lactate permease family.

The protein resides in the cell inner membrane. The catalysed reaction is (S)-lactate(in) + H(+)(in) = (S)-lactate(out) + H(+)(out). The enzyme catalyses (R)-lactate(in) + H(+)(in) = (R)-lactate(out) + H(+)(out). It catalyses the reaction glycolate(in) + H(+)(in) = glycolate(out) + H(+)(out). Functionally, uptake of L-lactate across the membrane. Can also transport D-lactate and glycolate. Seems to be driven by a proton motive force. In Escherichia coli O6:H1 (strain CFT073 / ATCC 700928 / UPEC), this protein is L-lactate permease (lldP).